The chain runs to 291 residues: N-acetylmannosamine kinase (291 aa).

ATP is bound by residues 5-12 and 132-139; these read AIDIGGTK and GVGGGVVS. H156, C166, C168, and C173 together coordinate Zn(2+).

The protein belongs to the ROK (NagC/XylR) family. NanK subfamily. As to quaternary structure, homodimer.

It catalyses the reaction an N-acyl-D-mannosamine + ATP = an N-acyl-D-mannosamine 6-phosphate + ADP + H(+). The protein operates within amino-sugar metabolism; N-acetylneuraminate degradation; D-fructose 6-phosphate from N-acetylneuraminate: step 2/5. Functionally, catalyzes the phosphorylation of N-acetylmannosamine (ManNAc) to ManNAc-6-P. The chain is N-acetylmannosamine kinase from Escherichia fergusonii (strain ATCC 35469 / DSM 13698 / CCUG 18766 / IAM 14443 / JCM 21226 / LMG 7866 / NBRC 102419 / NCTC 12128 / CDC 0568-73).